We begin with the raw amino-acid sequence, 479 residues long: Arf-GAP domain and FG repeat-containing protein 2 (479 aa).

The Arf-GAP domain maps to 27–153 (EVWCRRVREL…WYVPPEQVKG (127 aa)). The C4-type zinc finger occupies 47-70 (CFECAQRGVTYVDITVGSFVCTTC). 2 disordered regions span residues 150–223 (QVKG…TKKA) and 450–479 (LSQP…NPFL). Positions 157-167 (SKGSVSATPVQ) are enriched in polar residues. Position 174 is an N6-acetyllysine (lysine 174). Low complexity predominate over residues 194–218 (SSQPGSQSQARSSSQARSSQPPSHS). A compositionally biased stretch (polar residues) spans 454–479 (AGISTNPFMTGSSAFASKPPTTNPFL).

In terms of assembly, interacts with EPS15R.

This is Arf-GAP domain and FG repeat-containing protein 2 (Agfg2) from Mus musculus (Mouse).